A 148-amino-acid polypeptide reads, in one-letter code: RQNYFLSFKQVLLVGGPTLYMPARPWFCPMMSPSMPGAPSAGPMSDSNSKGSTPRSPARPTVSTGPPMDDLAASMERCSLDCMSPRPAPKGPDDSGSTAPFRPFALSPARFHFPPSSGPPSSPTNANCPRPLATVAPLSGTAFFPGTT.

Over residues 36 to 45 (PGAPSAGPMS) the composition is skewed to low complexity. The tract at residues 36–148 (PGAPSAGPMS…SGTAFFPGTT (113 aa)) is disordered. Residues 46 to 55 (DSNSKGSTPR) show a composition bias toward polar residues.

This is an uncharacterized protein from Bovine leukemia virus (isolate Japanese BLV-1) (BLV).